A 186-amino-acid polypeptide reads, in one-letter code: dTTP/UTP pyrophosphatase (186 aa).

Residue D67 is the Proton acceptor of the active site.

The protein belongs to the Maf family. YhdE subfamily. A divalent metal cation is required as a cofactor.

It localises to the cytoplasm. It carries out the reaction dTTP + H2O = dTMP + diphosphate + H(+). It catalyses the reaction UTP + H2O = UMP + diphosphate + H(+). Nucleoside triphosphate pyrophosphatase that hydrolyzes dTTP and UTP. May have a dual role in cell division arrest and in preventing the incorporation of modified nucleotides into cellular nucleic acids. The protein is dTTP/UTP pyrophosphatase of Carboxydothermus hydrogenoformans (strain ATCC BAA-161 / DSM 6008 / Z-2901).